The chain runs to 103 residues: Large ribosomal subunit protein uL24 (103 aa).

This sequence belongs to the universal ribosomal protein uL24 family. As to quaternary structure, part of the 50S ribosomal subunit.

Its function is as follows. One of two assembly initiator proteins, it binds directly to the 5'-end of the 23S rRNA, where it nucleates assembly of the 50S subunit. Functionally, one of the proteins that surrounds the polypeptide exit tunnel on the outside of the subunit. The chain is Large ribosomal subunit protein uL24 from Histophilus somni (strain 129Pt) (Haemophilus somnus).